The primary structure comprises 398 residues: Stabilizer of axonemal microtubules 2 (398 aa).

Mn regions lie at residues 114–126 (STTF…PQEI), 148–162 (ITSH…QLEL), 248–260 (NSTS…PYQA), 282–296 (KSIM…ESCR), 316–328 (LSTF…PHEL), and 350–364 (VTMY…RQEI).

Belongs to the FAM154 family.

The polypeptide is Stabilizer of axonemal microtubules 2 (SAXO2) (Homo sapiens (Human)).